Consider the following 450-residue polypeptide: Probable ECA polymerase (450 aa).

Transmembrane regions (helical) follow at residues 6 to 26 (FSGL…LTWF), 37 to 57 (VFFS…TSVL), 63 to 83 (VGVA…CFYA), 118 to 138 (VILM…NGFL), 155 to 175 (GVAL…VYFL), 181 to 201 (AWLF…MIVG), 207 to 227 (IIIA…ISLW), 228 to 248 (MLAA…LKRY), 341 to 361 (LVVM…GLII), 378 to 398 (YKAA…IVLA), and 410 to 430 (VFFI…YWLF).

Belongs to the WzyE family. Probably part of a complex composed of WzxE, WzyE and WzzE.

The protein resides in the cell inner membrane. Its pathway is bacterial outer membrane biogenesis; enterobacterial common antigen biosynthesis. In terms of biological role, probably involved in the polymerization of enterobacterial common antigen (ECA) trisaccharide repeat units. This chain is Probable ECA polymerase, found in Escherichia coli O7:K1 (strain IAI39 / ExPEC).